We begin with the raw amino-acid sequence, 135 residues long: Ribonuclease VapC9 (135 aa).

Residues 15-118 (VVDTNVLMYV…LKRKAKQRGI (104 aa)) form the PINc domain. The Mg(2+) site is built by aspartate 17 and aspartate 88.

Belongs to the PINc/VapC protein family. In terms of assembly, dimer. Mg(2+) is required as a cofactor.

Its function is as follows. Toxic component of a type II toxin-antitoxin (TA) system. An RNase. This is Ribonuclease VapC9 from Archaeoglobus fulgidus (strain ATCC 49558 / DSM 4304 / JCM 9628 / NBRC 100126 / VC-16).